A 220-amino-acid chain; its full sequence is Large ribosomal subunit protein eL15 (220 aa).

A compositionally biased stretch (basic and acidic residues) spans 197-207; sequence KKRHEASRGAR. The disordered stretch occupies residues 197–220; sequence KKRHEASRGARDPWQIAEKLKEEK.

This sequence belongs to the eukaryotic ribosomal protein eL15 family.

In Desulfurococcus amylolyticus (strain DSM 18924 / JCM 16383 / VKM B-2413 / 1221n) (Desulfurococcus kamchatkensis), this protein is Large ribosomal subunit protein eL15.